A 334-amino-acid polypeptide reads, in one-letter code: Formamidase (334 aa).

One can recognise a CN hydrolase domain in the interval 14 to 260 (FLVAAIQFPV…WEIVTGEIYP (247 aa)). The active-site Proton acceptor is the E60. The active-site Proton donor is K133. Residue C166 is the Nucleophile of the active site.

The protein belongs to the carbon-nitrogen hydrolase superfamily. Aliphatic amidase family.

The catalysed reaction is formamide + H2O = formate + NH4(+). Its function is as follows. Is an aliphatic amidase with a restricted substrate specificity, as it only hydrolyzes formamide. This Helicobacter pylori (strain HPAG1) protein is Formamidase.